The following is an 84-amino-acid chain: Small ribosomal subunit protein bS16 (84 aa).

Belongs to the bacterial ribosomal protein bS16 family.

The chain is Small ribosomal subunit protein bS16 from Methylococcus capsulatus (strain ATCC 33009 / NCIMB 11132 / Bath).